A 390-amino-acid polypeptide reads, in one-letter code: Na(+)/H(+) antiporter NhaA (390 aa).

12 helical membrane-spanning segments follow: residues 14–34 (AAGGIVLIAAAALAMLLANLN), 61–81 (MLLWVNDALMAVFFLLVGLEV), 97–117 (SLPVIAALGGMVLPAALYLAF), 126–146 (AGWAIPAATDIAFALGILALL), 156–176 (VFLMALAIIDDLGAIVIIALF), 181–201 (LSMVSLMVAAGAIAVLAVLNL), 221–241 (VLKSGVHATLAGVIIGFFVPL), 256–276 (ALHPWVGFLILPLFAFANAGV), 280–300 (GVTLAGLASLLPLGIIAGLFI), 305–325 (GISLFCALAVKLKWATLPPGV), 330–350 (ILAVGVLCGIGFTMSIFIASL), and 362–382 (WAKLGILVGSLLAAVIGYALL).

This sequence belongs to the NhaA Na(+)/H(+) (TC 2.A.33) antiporter family.

The protein resides in the cell inner membrane. The catalysed reaction is Na(+)(in) + 2 H(+)(out) = Na(+)(out) + 2 H(+)(in). Functionally, na(+)/H(+) antiporter that extrudes sodium in exchange for external protons. In Cronobacter sakazakii (strain ATCC BAA-894) (Enterobacter sakazakii), this protein is Na(+)/H(+) antiporter NhaA.